Here is a 76-residue protein sequence, read N- to C-terminus: Large ribosomal subunit protein bL31 (76 aa).

Belongs to the bacterial ribosomal protein bL31 family. Type A subfamily. In terms of assembly, part of the 50S ribosomal subunit.

Its function is as follows. Binds the 23S rRNA. This chain is Large ribosomal subunit protein bL31, found in Methylocella silvestris (strain DSM 15510 / CIP 108128 / LMG 27833 / NCIMB 13906 / BL2).